A 156-amino-acid polypeptide reads, in one-letter code: Small ribosomal subunit protein uS7 (156 aa).

Belongs to the universal ribosomal protein uS7 family. Part of the 30S ribosomal subunit. Contacts proteins S9 and S11.

Functionally, one of the primary rRNA binding proteins, it binds directly to 16S rRNA where it nucleates assembly of the head domain of the 30S subunit. Is located at the subunit interface close to the decoding center, probably blocks exit of the E-site tRNA. The protein is Small ribosomal subunit protein uS7 of Allorhizobium ampelinum (strain ATCC BAA-846 / DSM 112012 / S4) (Agrobacterium vitis (strain S4)).